The following is a 196-amino-acid chain: dTDP-4-dehydro-6-deoxyglucose 3-epimerase (196 aa).

Substrate contacts are provided by residues Arg-21, Glu-26, 45–47 (QVN), and Arg-57. The active-site Proton acceptor is the His-60. Lys-70 and Arg-117 together coordinate substrate. Tyr-130 (proton donor) is an active-site residue. Glu-141 and Arg-166 together coordinate substrate.

Belongs to the dTDP-4-dehydrorhamnose 3,5-epimerase family. As to quaternary structure, homodimer.

It catalyses the reaction dTDP-4-dehydro-6-deoxy-alpha-D-glucose = dTDP-4-dehydro-6-deoxy-alpha-D-allose. It participates in antibiotic biosynthesis. In terms of biological role, involved in the biosynthesis of dTDP-6-deoxy-D-allose, an intermediate in the biosynthesis of mycinose, which is one of the two unusual sugars attached to the 16-membered macrolactone ring of the aglycone antibiotic dihydrochalcomycin (GERI-155). Catalyzes the conversion of dTDP-4-oxo-6-deoxyglucose to dTDP-4-oxo-6-deoxyallose, via a C-3 epimerization. In Streptomyces sp, this protein is dTDP-4-dehydro-6-deoxyglucose 3-epimerase.